Consider the following 226-residue polypeptide: Urease accessory protein UreF (226 aa).

This sequence belongs to the UreF family. In terms of assembly, ureD, UreF and UreG form a complex that acts as a GTP-hydrolysis-dependent molecular chaperone, activating the urease apoprotein by helping to assemble the nickel containing metallocenter of UreC. The UreE protein probably delivers the nickel.

It is found in the cytoplasm. Functionally, required for maturation of urease via the functional incorporation of the urease nickel metallocenter. This is Urease accessory protein UreF from Burkholderia mallei (strain NCTC 10247).